Reading from the N-terminus, the 460-residue chain is tRNA modification GTPase MnmE (460 aa).

Residues R29, E91, and R131 each coordinate (6S)-5-formyl-5,6,7,8-tetrahydrofolate. Residues 226 to 383 form the TrmE-type G domain; the sequence is GLRVALVGRP…LVQAVLERCG (158 aa). Residue N236 participates in K(+) binding. Residues 236–241, 255–261, and 280–283 contribute to the GTP site; these read NVGKSS, TDLPGTT, and DTAG. S240 serves as a coordination point for Mg(2+). Residues T255, L257, and T260 each coordinate K(+). T261 contributes to the Mg(2+) binding site. K460 contributes to the (6S)-5-formyl-5,6,7,8-tetrahydrofolate binding site.

It belongs to the TRAFAC class TrmE-Era-EngA-EngB-Septin-like GTPase superfamily. TrmE GTPase family. In terms of assembly, homodimer. Heterotetramer of two MnmE and two MnmG subunits. K(+) is required as a cofactor.

The protein resides in the cytoplasm. Functionally, exhibits a very high intrinsic GTPase hydrolysis rate. Involved in the addition of a carboxymethylaminomethyl (cmnm) group at the wobble position (U34) of certain tRNAs, forming tRNA-cmnm(5)s(2)U34. The polypeptide is tRNA modification GTPase MnmE (Synechococcus sp. (strain WH7803)).